Reading from the N-terminus, the 89-residue chain is Small ribosomal subunit protein uS15 (89 aa).

The protein belongs to the universal ribosomal protein uS15 family. As to quaternary structure, part of the 30S ribosomal subunit. Forms a bridge to the 50S subunit in the 70S ribosome, contacting the 23S rRNA.

One of the primary rRNA binding proteins, it binds directly to 16S rRNA where it helps nucleate assembly of the platform of the 30S subunit by binding and bridging several RNA helices of the 16S rRNA. In terms of biological role, forms an intersubunit bridge (bridge B4) with the 23S rRNA of the 50S subunit in the ribosome. This chain is Small ribosomal subunit protein uS15, found in Granulibacter bethesdensis (strain ATCC BAA-1260 / CGDNIH1).